Reading from the N-terminus, the 195-residue chain is Holliday junction branch migration complex subunit RuvA (195 aa).

The interval 1–66 (MNYLVFKVIY…LIIKDLYGFR (66 aa)) is domain I. The interval 67 to 141 (TYNERLLFID…KYINKVSEKN (75 aa)) is domain II. Position 141 (Asn-141) is a region of interest, flexible linker. A domain III region spans residues 141–195 (NPWAKELSIGLENLGYDKKDIEYAITKVKVDTQQNIDISEIIGCAIKEISLRHEN).

Belongs to the RuvA family. As to quaternary structure, homotetramer. Forms an RuvA(8)-RuvB(12)-Holliday junction (HJ) complex. HJ DNA is sandwiched between 2 RuvA tetramers; dsDNA enters through RuvA and exits via RuvB. An RuvB hexamer assembles on each DNA strand where it exits the tetramer. Each RuvB hexamer is contacted by two RuvA subunits (via domain III) on 2 adjacent RuvB subunits; this complex drives branch migration. In the full resolvosome a probable DNA-RuvA(4)-RuvB(12)-RuvC(2) complex forms which resolves the HJ.

The protein resides in the cytoplasm. Its function is as follows. The RuvA-RuvB-RuvC complex processes Holliday junction (HJ) DNA during genetic recombination and DNA repair, while the RuvA-RuvB complex plays an important role in the rescue of blocked DNA replication forks via replication fork reversal (RFR). RuvA specifically binds to HJ cruciform DNA, conferring on it an open structure. The RuvB hexamer acts as an ATP-dependent pump, pulling dsDNA into and through the RuvAB complex. HJ branch migration allows RuvC to scan DNA until it finds its consensus sequence, where it cleaves and resolves the cruciform DNA. This Ureaplasma urealyticum serovar 10 (strain ATCC 33699 / Western) protein is Holliday junction branch migration complex subunit RuvA.